Consider the following 254-residue polypeptide: Acetyl-coenzyme A carboxylase carboxyl transferase subunit beta (254 aa).

In terms of domain architecture, CoA carboxyltransferase N-terminal spans 1–254 (MWLRCPHCHQ…LLKTGSVANE (254 aa)). Zn(2+) contacts are provided by Cys-5, Cys-8, Cys-23, and Cys-26. Residues 5–26 (CPHCHQLLFAKQLTQYAVCPNC) form a C4-type zinc finger.

The protein belongs to the AccD/PCCB family. Acetyl-CoA carboxylase is a heterohexamer composed of biotin carboxyl carrier protein (AccB), biotin carboxylase (AccC) and two subunits each of ACCase subunit alpha (AccA) and ACCase subunit beta (AccD). The cofactor is Zn(2+).

It is found in the cytoplasm. It catalyses the reaction N(6)-carboxybiotinyl-L-lysyl-[protein] + acetyl-CoA = N(6)-biotinyl-L-lysyl-[protein] + malonyl-CoA. It participates in lipid metabolism; malonyl-CoA biosynthesis; malonyl-CoA from acetyl-CoA: step 1/1. Its function is as follows. Component of the acetyl coenzyme A carboxylase (ACC) complex. Biotin carboxylase (BC) catalyzes the carboxylation of biotin on its carrier protein (BCCP) and then the CO(2) group is transferred by the transcarboxylase to acetyl-CoA to form malonyl-CoA. The chain is Acetyl-coenzyme A carboxylase carboxyl transferase subunit beta from Limosilactobacillus reuteri (strain DSM 20016) (Lactobacillus reuteri).